The following is a 1460-amino-acid chain: Nonribosomal peptide synthetase 6 (1460 aa).

An adenylation region spans residues 63-468; it reads EQAALHPEKI…GRQDQQVKLR (406 aa). One can recognise a Carrier 1 domain in the interval 600-675; sequence EPTTEMEIKL…AMATKIKPLS (76 aa). Residue serine 636 is modified to O-(pantetheine 4'-phosphoryl)serine. Positions 712-1135 are condensation; sequence VQDVYPCTPL…AVLDPSEAQD (424 aa). Carrier domains follow at residues 1168–1241 and 1236–1312; these read SPNE…GNEK and SIGN…EETD. 2 positions are modified to O-(pantetheine 4'-phosphoryl)serine: serine 1202 and serine 1273. Positions 1303 to 1324 are disordered; the sequence is ELASSAEETDSPQTETNSNAPY. Polar residues predominate over residues 1313–1322; it reads SPQTETNSNA.

It belongs to the NRP synthetase family.

The protein operates within siderophore biosynthesis. Its function is as follows. NRPS involved in extracellular coprogen-type siderophores biosynthesis. The role of extracellular siderophores in fungal virulence to plants is to supply iron to the fungus during plant infection, but not to act as phytotoxins, depriving their hosts of iron. This is Nonribosomal peptide synthetase 6 from Alternaria brassicicola (Dark leaf spot agent).